A 301-amino-acid chain; its full sequence is UDP-N-acetylenolpyruvoylglucosamine reductase (301 aa).

One can recognise an FAD-binding PCMH-type domain in the interval 29–195 (KIGGPADVFV…VEAIFSLTRG (167 aa)). Arginine 174 is an active-site residue. Catalysis depends on serine 224, which acts as the Proton donor. The active site involves glutamate 294.

The protein belongs to the MurB family. FAD is required as a cofactor.

The protein localises to the cytoplasm. The enzyme catalyses UDP-N-acetyl-alpha-D-muramate + NADP(+) = UDP-N-acetyl-3-O-(1-carboxyvinyl)-alpha-D-glucosamine + NADPH + H(+). Its pathway is cell wall biogenesis; peptidoglycan biosynthesis. Its function is as follows. Cell wall formation. In Halalkalibacterium halodurans (strain ATCC BAA-125 / DSM 18197 / FERM 7344 / JCM 9153 / C-125) (Bacillus halodurans), this protein is UDP-N-acetylenolpyruvoylglucosamine reductase.